Consider the following 179-residue polypeptide: Peptide deformylase (179 aa).

Fe cation contacts are provided by cysteine 102 and histidine 144. Glutamate 145 is a catalytic residue. Residue histidine 148 coordinates Fe cation.

This sequence belongs to the polypeptide deformylase family. Fe(2+) is required as a cofactor.

It catalyses the reaction N-terminal N-formyl-L-methionyl-[peptide] + H2O = N-terminal L-methionyl-[peptide] + formate. In terms of biological role, removes the formyl group from the N-terminal Met of newly synthesized proteins. Requires at least a dipeptide for an efficient rate of reaction. N-terminal L-methionine is a prerequisite for activity but the enzyme has broad specificity at other positions. In Wolbachia sp. subsp. Drosophila simulans (strain wRi), this protein is Peptide deformylase.